Consider the following 324-residue polypeptide: Hydroxylase/desaturase CTB9 (324 aa).

The span at 1–11 (MTSTITTTETL) shows a compositional bias: polar residues. Disordered stretches follow at residues 1 to 33 (MTST…KELP) and 288 to 308 (TARR…EPRA).

The protein belongs to the asaB hydroxylase/desaturase family.

The protein operates within mycotoxin biosynthesis. Hydroxylase/desaturase; part of the gene cluster that mediates the biosynthesis of cercosporin, a light-activated, non-host-selective toxin. The perylenequinone chromophore of cercosporin absorbs light energy to attain an electronically-activated triplet state and produces active oxygen species such as the hydroxyl radical, superoxide, hydrogen peroxide or singlet oxygen upon reaction with oxygen molecules. These reactive oxygen species cause damage to various cellular components including lipids, proteins and nucleic acids. The first step of cercosporin biosynthesis is performed by the polyketide synthase CTB1 which catalyzes the formation of nor-toralactone. The starter unit acyltransferase (SAT) domain of CTB1 initiates polyketide extension by the selective utilization of acetyl-CoA, which is elongated to the heptaketide in the beta-ketoacyl synthase (KS) domain by successive condensations with six malonyl units introduced by the malonyl acyltransferase (MAT) domain. The product template (PT) domain catalyzes C4-C9 and C2-C11 aldol cyclizations and dehydrations to a trihydroxynaphthalene, which is thought to be delivered to the thioesterase (TE) domain for product release. The bifunctional enzyme CTB3 then methylates nor-toralactone to toralactone before conducting an unusual oxidative aromatic ring opening. The O-methyltransferase CTB2 further methylates the nascent OH-6 of the CBT3 product, blocking further oxidation at this site before the reductase CTB6 reduces the 2-oxopropyl ketone at position C7, giving naphthalene. The FAD-dependent monooxygenase CTB5 in concert with the multicopper oxidase CTB12 are responsible for homodimerization of naphthalene with CTB7 installing the dioxepine moiety, finally producing cercosporin. The fasciclin domain-containing protein CTB11 might act with CTB5 and CTB12 whereas the roles of CTB9 and CTB10 have still to be elucidated. The sequence is that of Hydroxylase/desaturase CTB9 from Cercospora beticola (Sugarbeet leaf spot fungus).